The chain runs to 100 residues: Urease subunit gamma (100 aa).

This sequence belongs to the urease gamma subunit family. As to quaternary structure, heterotrimer of UreA (gamma), UreB (beta) and UreC (alpha) subunits. Three heterotrimers associate to form the active enzyme.

The protein localises to the cytoplasm. The enzyme catalyses urea + 2 H2O + H(+) = hydrogencarbonate + 2 NH4(+). The protein operates within nitrogen metabolism; urea degradation; CO(2) and NH(3) from urea (urease route): step 1/1. The chain is Urease subunit gamma from Nostoc sp. (strain PCC 7120 / SAG 25.82 / UTEX 2576).